Consider the following 101-residue polypeptide: Small ribosomal subunit protein uS14 (101 aa).

The segment at 1-26 (MAKVSSIQKNKSRQKKSQSLHNKRSE) is disordered. Over residues 10–22 (NKSRQKKSQSLHN) the composition is skewed to basic residues.

This sequence belongs to the universal ribosomal protein uS14 family. As to quaternary structure, part of the 30S ribosomal subunit. Contacts proteins S3 and S10.

In terms of biological role, binds 16S rRNA, required for the assembly of 30S particles and may also be responsible for determining the conformation of the 16S rRNA at the A site. The polypeptide is Small ribosomal subunit protein uS14 (Rickettsia prowazekii (strain Madrid E)).